The sequence spans 201 residues: Dephospho-CoA kinase (201 aa).

The region spanning 4–201 (SVGLTGNIAS…KYLREAKIKQ (198 aa)) is the DPCK domain. 12–17 (ASGKST) contacts ATP.

This sequence belongs to the CoaE family.

The protein localises to the cytoplasm. It catalyses the reaction 3'-dephospho-CoA + ATP = ADP + CoA + H(+). It functions in the pathway cofactor biosynthesis; coenzyme A biosynthesis; CoA from (R)-pantothenate: step 5/5. Functionally, catalyzes the phosphorylation of the 3'-hydroxyl group of dephosphocoenzyme A to form coenzyme A. This Legionella pneumophila (strain Paris) protein is Dephospho-CoA kinase.